The following is a 129-amino-acid chain: Snaclec coagulation factor IX/factor X-binding protein subunit B3 (129 aa).

The N-terminal stretch at 1–8 (LSLSGTAA) is a signal peptide. Intrachain disulfides connect C10-C21, C38-C127, and C104-C119. A C-type lectin domain is found at 17–128 (YEGHCYKPFN…CRMMANFVCE (112 aa)).

This sequence belongs to the snaclec family. Heterodimer of subunits A and B3; disulfide-linked. Expressed by the venom gland.

The protein localises to the secreted. In terms of biological role, anticoagulant protein which binds to the gamma-carboxyglutamic acid-domain regions of factors IX (F9) and factor X (F10) in the presence of calcium with a 1 to 1 stoichiometry. The protein is Snaclec coagulation factor IX/factor X-binding protein subunit B3 of Trimeresurus stejnegeri (Chinese green tree viper).